A 64-amino-acid polypeptide reads, in one-letter code: DNA-directed RNA polymerase subunit Rpo10 (64 aa).

Residues cysteine 7, cysteine 10, cysteine 45, and cysteine 46 each coordinate Zn(2+).

This sequence belongs to the archaeal Rpo10/eukaryotic RPB10 RNA polymerase subunit family. Part of the RNA polymerase complex. Zn(2+) serves as cofactor.

The protein resides in the cytoplasm. It catalyses the reaction RNA(n) + a ribonucleoside 5'-triphosphate = RNA(n+1) + diphosphate. DNA-dependent RNA polymerase (RNAP) catalyzes the transcription of DNA into RNA using the four ribonucleoside triphosphates as substrates. In Halorubrum lacusprofundi (strain ATCC 49239 / DSM 5036 / JCM 8891 / ACAM 34), this protein is DNA-directed RNA polymerase subunit Rpo10.